We begin with the raw amino-acid sequence, 468 residues long: MVDTESPLCPLSPLEAGDLESPLSEEFLQEMGNIQEISQSIGEDSSGSFGFTEYQYLGSCPGSDGSVITDTLSPASSPSSVTYPVVPGSVDESPSGALNIECRICGDKASGYHYGVHACEGCKGFFRRTIRLKLVYDKCDRSCKIQKKNRNKCQYCRFHKCLSVGMSHNAIRFGRMPRSEKAKLKAEILTCEHDIEDSETADLKSLAKRIYEAYLKNFNMNKVKARVILSGKASNNPPFVIHDMETLCMAEKTLVAKLVANGIQNKEAEVRIFHCCQCTSVETVTELTEFAKAIPGFANLDLNDQVTLLKYGVYEAIFAMLSSVMNKDGMLVAYGNGFITREFLKSLRKPFCDIMEPKFDFAMKFNALELDDSDISLFVAAIICCGDRPGLLNVGHIEKMQEGIVHVLRLHLQSNHPDDIFLFPKLLQKMADLRQLVTEHAQLVQIIKKTESDAALHPLLQEIYRDMY.

A DNA-binding region (nuclear receptor) is located at residues 99–173 (NIECRICGDK…VGMSHNAIRF (75 aa)). NR C4-type zinc fingers lie at residues 102 to 122 (CRIC…CEGC) and 139 to 161 (CDRS…FHKC). Residues 239-466 (FVIHDMETLC…HPLLQEIYRD (228 aa)) form the NR LBD domain. Positions 280, 314, and 464 each coordinate indeglitazar. The tract at residues 304-433 (DQVTLLKYGV…PKLLQKMADL (130 aa)) is required for heterodimerization with RXRA.

Belongs to the nuclear hormone receptor family. NR1 subfamily. Heterodimer; with RXRA. This heterodimerization is required for DNA binding and transactivation activity. Interacts with NCOA3 coactivator. Interacts with CITED2; the interaction stimulates its transcriptional activity. Also interacts with PPARBP in vitro. Interacts with AKAP13, LPIN1, PRDM16 and coactivator NCOA6. Interacts with ASXL1 and ASXL2. Interacts with PER2. Interacts with SIRT1; the interaction seems to be modulated by NAD(+) levels. Interacts with CRY1 and CRY2. In hepatocytes, interacts with PAQR3 and HUWE1; the interactions promote PPARA poylubiquitination and HUWE1-mediated degradation. Post-translationally, ubiquitinated by E3 ubiquitin-protein ligase HUWE1; leading to proteasomal degradation. In terms of processing, phosphorylated. As to expression, skeletal muscle, liver, heart and kidney. Expressed in monocytes.

The protein localises to the nucleus. Ligand-activated transcription factor. Key regulator of lipid metabolism. Activated by the endogenous ligand 1-palmitoyl-2-oleoyl-sn-glycerol-3-phosphocholine (16:0/18:1-GPC). Activated by oleylethanolamide, a naturally occurring lipid that regulates satiety. Receptor for peroxisome proliferators such as hypolipidemic drugs and fatty acids. Regulates the peroxisomal beta-oxidation pathway of fatty acids. Functions as a transcription activator for the ACOX1 and P450 genes. Transactivation activity requires heterodimerization with RXRA and is antagonized by NR2C2. May be required for the propagation of clock information to metabolic pathways regulated by PER2. In Homo sapiens (Human), this protein is Peroxisome proliferator-activated receptor alpha (PPARA).